The sequence spans 305 residues: UDP-3-O-acyl-N-acetylglucosamine deacetylase (305 aa).

The Zn(2+) site is built by H78, H235, and D239. The active-site Proton donor is H262.

This sequence belongs to the LpxC family. It depends on Zn(2+) as a cofactor.

It catalyses the reaction a UDP-3-O-[(3R)-3-hydroxyacyl]-N-acetyl-alpha-D-glucosamine + H2O = a UDP-3-O-[(3R)-3-hydroxyacyl]-alpha-D-glucosamine + acetate. The protein operates within glycolipid biosynthesis; lipid IV(A) biosynthesis; lipid IV(A) from (3R)-3-hydroxytetradecanoyl-[acyl-carrier-protein] and UDP-N-acetyl-alpha-D-glucosamine: step 2/6. Functionally, catalyzes the hydrolysis of UDP-3-O-myristoyl-N-acetylglucosamine to form UDP-3-O-myristoylglucosamine and acetate, the committed step in lipid A biosynthesis. The chain is UDP-3-O-acyl-N-acetylglucosamine deacetylase from Citrifermentans bemidjiense (strain ATCC BAA-1014 / DSM 16622 / JCM 12645 / Bem) (Geobacter bemidjiensis).